Reading from the N-terminus, the 247-residue chain is Retbindin (247 aa).

Positions methionine 1–serine 31 are cleaved as a signal peptide. 4 disulfides stabilise this stretch: cysteine 99/cysteine 169, cysteine 106/cysteine 146, cysteine 139/cysteine 183, and cysteine 152/cysteine 165.

This sequence belongs to the folate receptor family. Not N-glycosylated. Expressed in the peripheral retina where it localizes to the inter-photoreceptor matrix (at protein level). May be produced by rod photoreceptors (at protein level).

The protein localises to the secreted. Its subcellular location is the extracellular space. It localises to the extracellular matrix. The protein resides in the interphotoreceptor matrix. It is found in the cell membrane. Riboflavin-binding protein which might have a role in retinal flavin transport. This chain is Retbindin (Rtbdn), found in Mus musculus (Mouse).